Consider the following 183-residue polypeptide: Adenine phosphoribosyltransferase (183 aa).

This sequence belongs to the purine/pyrimidine phosphoribosyltransferase family. In terms of assembly, homodimer.

The protein localises to the cytoplasm. It carries out the reaction AMP + diphosphate = 5-phospho-alpha-D-ribose 1-diphosphate + adenine. Its pathway is purine metabolism; AMP biosynthesis via salvage pathway; AMP from adenine: step 1/1. Functionally, catalyzes a salvage reaction resulting in the formation of AMP, that is energically less costly than de novo synthesis. The sequence is that of Adenine phosphoribosyltransferase from Salmonella typhi.